The primary structure comprises 183 residues: dCTP deaminase (183 aa).

Residues 97–102 (RSSFAR) and aspartate 113 each bind dCTP. Glutamate 123 (proton donor/acceptor) is an active-site residue. DCTP-binding residues include tyrosine 155 and glutamine 162.

Belongs to the dCTP deaminase family. In terms of assembly, homotrimer.

The catalysed reaction is dCTP + H2O + H(+) = dUTP + NH4(+). The protein operates within pyrimidine metabolism; dUMP biosynthesis; dUMP from dCTP (dUTP route): step 1/2. In terms of biological role, catalyzes the deamination of dCTP to dUTP. The chain is dCTP deaminase from Sulfurisphaera tokodaii (strain DSM 16993 / JCM 10545 / NBRC 100140 / 7) (Sulfolobus tokodaii).